The chain runs to 1060 residues: Carbamoyl phosphate synthase large chain (1060 aa).

The interval 1 to 401 (MPKRTDIRKI…SLLKACRSLE (401 aa)) is carboxyphosphate synthetic domain. The ATP site is built by Arg129, Arg169, Gly175, Gly176, Arg208, Ile210, Glu215, Gly241, Ile242, His243, Gln284, and Glu298. In terms of domain architecture, ATP-grasp 1 spans 133–327 (KQLMEELNQP…IAKLAAKIAV (195 aa)). Gln284, Glu298, and Asn300 together coordinate Mg(2+). Mn(2+) is bound by residues Gln284, Glu298, and Asn300. Residues 402–546 (IGVDHIKIAD…YSTYAVENES (145 aa)) form an oligomerization domain region. Residues 547–929 (LISDKASILV…ALYKAFEAAY (383 aa)) are carbamoyl phosphate synthetic domain. Residues 671–861 (EATLQALNIP…MAQVATKVIL (191 aa)) enclose the ATP-grasp 2 domain. The ATP site is built by Arg707, Ala746, Leu748, Glu752, Gly777, Val778, His779, Ser780, Gln820, and Glu832. The Mg(2+) site is built by Gln820, Glu832, and Asn834. Residues Gln820, Glu832, and Asn834 each coordinate Mn(2+). The region spanning 930–1060 (LHMPDYGNIV…SRAFTLKVLD (131 aa)) is the MGS-like domain. The interval 930-1060 (LHMPDYGNIV…SRAFTLKVLD (131 aa)) is allosteric domain.

This sequence belongs to the CarB family. In terms of assembly, composed of two chains; the small (or glutamine) chain promotes the hydrolysis of glutamine to ammonia, which is used by the large (or ammonia) chain to synthesize carbamoyl phosphate. Tetramer of heterodimers (alpha,beta)4. Mg(2+) serves as cofactor. It depends on Mn(2+) as a cofactor.

It carries out the reaction hydrogencarbonate + L-glutamine + 2 ATP + H2O = carbamoyl phosphate + L-glutamate + 2 ADP + phosphate + 2 H(+). The enzyme catalyses hydrogencarbonate + NH4(+) + 2 ATP = carbamoyl phosphate + 2 ADP + phosphate + 2 H(+). The protein operates within amino-acid biosynthesis; L-arginine biosynthesis; carbamoyl phosphate from bicarbonate: step 1/1. It participates in pyrimidine metabolism; UMP biosynthesis via de novo pathway; (S)-dihydroorotate from bicarbonate: step 1/3. In terms of biological role, large subunit of the glutamine-dependent carbamoyl phosphate synthetase (CPSase). CPSase catalyzes the formation of carbamoyl phosphate from the ammonia moiety of glutamine, carbonate, and phosphate donated by ATP, constituting the first step of 2 biosynthetic pathways, one leading to arginine and/or urea and the other to pyrimidine nucleotides. The large subunit (synthetase) binds the substrates ammonia (free or transferred from glutamine from the small subunit), hydrogencarbonate and ATP and carries out an ATP-coupled ligase reaction, activating hydrogencarbonate by forming carboxy phosphate which reacts with ammonia to form carbamoyl phosphate. The polypeptide is Carbamoyl phosphate synthase large chain (Streptococcus agalactiae serotype Ia (strain ATCC 27591 / A909 / CDC SS700)).